A 155-amino-acid polypeptide reads, in one-letter code: Small ribosomal subunit protein uS15 (155 aa).

The span at 1–10 (MARMHTRRRG) shows a compositional bias: basic residues. Residues 1 to 66 (MARMHTRRRG…EGVQGTPVPD (66 aa)) form a disordered region. Positions 21–33 (EPPEWSDVDEDAI) are enriched in acidic residues. Over residues 34–45 (EERVVELAEQGH) the composition is skewed to basic and acidic residues.

This sequence belongs to the universal ribosomal protein uS15 family. Part of the 30S ribosomal subunit.

This Halobacterium salinarum (strain ATCC 700922 / JCM 11081 / NRC-1) (Halobacterium halobium) protein is Small ribosomal subunit protein uS15.